Here is a 637-residue protein sequence, read N- to C-terminus: Delta(14)-sterol reductase LBR (637 aa).

In terms of domain architecture, Tudor spans 1 to 62; that stretch reads MPNRKYADGE…DIRLQSSFKQ (62 aa). Over 1-205 the chain is Nuclear; the sequence is MPNRKYADGE…KTKELEFGGR (205 aa). Positions 57 to 73 are enriched in low complexity; the sequence is QSSFKQRKSQSSSSSPS. A disordered region spans residues 57–151; that stretch reads QSSFKQRKSQ…SKLLEQQKLK (95 aa). The span at 74-97 shows a compositional bias: basic residues; sequence RRSRSRSRSRSPGRPAKGRRRSSS. Phosphoserine; by PKA occurs at positions 95 and 96. Basic and acidic residues-rich tracts occupy residues 98-110 and 124-151; these read HSRE…KKII and NTRR…QKLK. The next 8 helical transmembrane spans lie at 206–226, 250–270, 288–309, 317–338, 378–399, 403–425, 466–486, and 554–574; these read FGTF…VLMC, VFGV…LPIG, INGF…YFQF, HFVQ…YLYI, YFCE…MLLA, IHNQ…LYVV, FYLV…ITIL, and PCGF…CLLV.

Belongs to the ERG4/ERG24 family. In terms of assembly, interacts with DNA. Interaction with DNA is sequence independent with higher affinity for supercoiled and relaxed circular DNA than linear DNA.

The protein resides in the nucleus inner membrane. It localises to the nucleus. It is found in the cytoplasm. The protein localises to the endoplasmic reticulum membrane. The enzyme catalyses 5alpha-cholest-8,14-dien-3beta-ol + NADPH + H(+) = 5alpha-cholest-8-en-3beta-ol + NADP(+). The catalysed reaction is 4,4-dimethyl-5alpha-cholesta-8,24-dien-3beta-ol + NADP(+) = 4,4-dimethyl-5alpha-cholesta-8,14,24-trien-3beta-ol + NADPH + H(+). It carries out the reaction 4,4-dimethyl-8,14-cholestadien-3beta-ol + NADPH + H(+) = 4,4-dimethyl-5alpha-cholest-8-en-3beta-ol + NADP(+). The protein operates within steroid biosynthesis; cholesterol biosynthesis. Its function is as follows. Catalyzes the reduction of the C14-unsaturated bond of lanosterol, as part of the metabolic pathway leading to cholesterol biosynthesis. Anchors the lamina and the heterochromatin to the inner nuclear membrane. This chain is Delta(14)-sterol reductase LBR (LBR), found in Gallus gallus (Chicken).